The primary structure comprises 1003 residues: DNA topoisomerase 3-alpha (1003 aa).

Residues 35–179 form the Toprim domain; that stretch reads KVLCVAEKND…NLRVLRARFS (145 aa). In terms of domain architecture, Topo IA-type catalytic spans 197 to 617; sequence DQRVSDAVDV…QQVQKYKQVF (421 aa). Residue Tyr362 is the O-(5'-phospho-DNA)-tyrosine intermediate of the active site. The segment at 400–426 is disordered; the sequence is GGPTPRNGSKSDQAHPPIHPTKYTSGL. The C4-type zinc finger occupies 658-685; sequence CPQCNKDMVLKTKKSGGFYLSCMGFPEC. Residues Cys815, Cys817, Cys840, and Cys845 each coordinate Zn(2+). The segment at 815–854 adopts a GRF-type 1 zinc-finger fold; that stretch reads CNCGREAVLLTVRKQGPNQGRHFYKCSNGDCNFFLWADSS. Residues 856–888 are disordered; sequence STGGGTPTSASGPPGSSVGCPSSVGSHMDGFGS. Low complexity predominate over residues 862 to 888; sequence PTSASGPPGSSVGCPSSVGSHMDGFGS. Positions 899, 901, 924, and 932 each coordinate Zn(2+). The segment at 899 to 941 adopts a GRF-type 2 zinc-finger fold; it reads CLCGQPAVTRTVQKDGPNKGRQFHTCAKPREQQCGFFQWVDEN. A disordered region spans residues 946 to 991; sequence SFAAPAWPGGRGKAQRPEAASKRPRAGSSDAGSTVKKPRKCSLCHQ.

This sequence belongs to the type IA topoisomerase family. In terms of assembly, binds ssDNA. Interacts (via N-terminal region) with BLM; the interaction is direct. Directly interacts with RMI1. Component of the RMI complex, containing at least TOP3A, RMI1 and RMI2. The RMI complex interacts with BLM. The cofactor is Mg(2+). In terms of tissue distribution, highly expressed in testis.

The protein resides in the mitochondrion matrix. It catalyses the reaction ATP-independent breakage of single-stranded DNA, followed by passage and rejoining.. Its function is as follows. Releases the supercoiling and torsional tension of DNA introduced during the DNA replication and transcription by transiently cleaving and rejoining one strand of the DNA duplex. Introduces a single-strand break via transesterification at a target site in duplex DNA. The scissile phosphodiester is attacked by the catalytic tyrosine of the enzyme, resulting in the formation of a DNA-(5'-phosphotyrosyl)-enzyme intermediate and the expulsion of a 3'-OH DNA strand. The free DNA strand then undergoes passage around the unbroken strand thus removing DNA supercoils. Finally, in the religation step, the DNA 3'-OH attacks the covalent intermediate to expel the active-site tyrosine and restore the DNA phosphodiester backbone. As an essential component of the RMI complex it is involved in chromosome separation and the processing of homologous recombination intermediates to limit DNA crossover formation in cells. Has DNA decatenation activity. It is required for mtDNA decatenation and segregation after completion of replication, in a process that does not require BLM, RMI1 and RMI2. The sequence is that of DNA topoisomerase 3-alpha (Top3a) from Mus musculus (Mouse).